The primary structure comprises 83 residues: ATP synthase subunit 9, mitochondrial (83 aa).

Helical transmembrane passes span 8 to 28 (IGAG…GNVL) and 45 to 72 (SFGY…LISS).

The protein belongs to the ATPase C chain family. In terms of assembly, F-type ATPases have 2 components, CF(1) - the catalytic core - and CF(0) - the membrane proton channel. CF(1) has five subunits: alpha(3), beta(3), gamma(1), delta(1), epsilon(1). CF(0) has three main subunits: a, b and c.

The protein localises to the mitochondrion membrane. Functionally, this protein is one of the chains of the nonenzymatic membrane component (F0) of mitochondrial ATPase. The sequence is that of ATP synthase subunit 9, mitochondrial (ATP9) from Helianthus annuus (Common sunflower).